A 302-amino-acid polypeptide reads, in one-letter code: Ribonucleoside-diphosphate reductase small subunit (302 aa).

Fe cation contacts are provided by glutamate 61, glutamate 91, and histidine 94. Tyrosine 98 is an active-site residue. Residues isoleucine 147 to leucine 167 form a helical membrane-spanning segment. Glutamate 154, glutamate 188, and histidine 191 together coordinate Fe cation.

It belongs to the ribonucleoside diphosphate reductase small chain family. In terms of assembly, heterotetramer composed of a homodimer of the large subunit (R1) and a homodimer of the small subunit (R2). Larger multisubunit protein complex are also active, composed of (R1)n(R2)n. It depends on Fe cation as a cofactor.

Its subcellular location is the host membrane. The enzyme catalyses a 2'-deoxyribonucleoside 5'-diphosphate + [thioredoxin]-disulfide + H2O = a ribonucleoside 5'-diphosphate + [thioredoxin]-dithiol. Its function is as follows. Ribonucleoside-diphosphate reductase holoenzyme provides the precursors necessary for viral DNA synthesis. Allows virus growth in non-dividing cells, as well as reactivation from latency in infected hosts. Catalyzes the biosynthesis of deoxyribonucleotides from the corresponding ribonucleotides. This Homo sapiens (Human) protein is Ribonucleoside-diphosphate reductase small subunit.